A 61-amino-acid polypeptide reads, in one-letter code: Photosystem II reaction center protein K (61 aa).

The propeptide occupies 1 to 24 (MPNILSLTCICFNSVLYPTSFFFA). The chain crosses the membrane as a helical span at residues 32–52 (IFNPIVDIMPVIPLFFFLLAF).

Belongs to the PsbK family. In terms of assembly, PSII is composed of 1 copy each of membrane proteins PsbA, PsbB, PsbC, PsbD, PsbE, PsbF, PsbH, PsbI, PsbJ, PsbK, PsbL, PsbM, PsbT, PsbX, PsbY, PsbZ, Psb30/Ycf12, at least 3 peripheral proteins of the oxygen-evolving complex and a large number of cofactors. It forms dimeric complexes. Detected in both etioplasts and green leaves; PSII is only assembled in green leaves.

Its subcellular location is the plastid. The protein localises to the chloroplast thylakoid membrane. In terms of biological role, one of the components of the core complex of photosystem II (PSII). PSII is a light-driven water:plastoquinone oxidoreductase that uses light energy to abstract electrons from H(2)O, generating O(2) and a proton gradient subsequently used for ATP formation. It consists of a core antenna complex that captures photons, and an electron transfer chain that converts photonic excitation into a charge separation. The sequence is that of Photosystem II reaction center protein K from Hordeum vulgare (Barley).